We begin with the raw amino-acid sequence, 2803 residues long: Microtubule-associated protein 1A (2803 aa).

Phosphoserine occurs at positions 114, 117, 118, 121, and 155. Y177 bears the Phosphotyrosine mark. Disordered stretches follow at residues 302–466 (GAVP…DLKP) and 486–516 (IDRS…PLPT). Phosphoserine is present on residues S319, S322, and S384. Basic and acidic residues predominate over residues 335 to 390 (AKREEVVEEGAKEARSELAKELAKTEKKAKESSEKPPEKPAKPERVKTESSEALKA). Basic residues predominate over residues 391–406 (EKRKLIKDKVGKKHLK). Composition is skewed to basic and acidic residues over residues 407-464 (EKIS…KPDL) and 486-499 (IDRS…KELS). 8 tandem repeats follow at residues 415 to 417 (KKD), 420 to 422 (KKE), 427 to 429 (RKE), 431 to 433 (KKD), 436 to 438 (RKE), 440 to 442 (KKD), 444 to 446 (KKE), and 449 to 451 (RKD). Positions 415–541 (KKDKEKKEIK…TQDFEEMKRE (127 aa)) are 9 X 3 AA repeats of K-K-[DE]. A Phosphothreonine modification is found at T504. S526 and S527 each carry phosphoserine. Residues 539–541 (KRE) form repeat 9. Composition is skewed to basic and acidic residues over residues 539-554 (KREE…DTGL) and 585-596 (QEEHVMKEKELV). Disordered stretches follow at residues 539-712 (KREE…KAPE), 734-806 (YIQD…GTPE), 847-1080 (EDQS…VNID), 1109-1548 (TGPI…EKKD), and 1573-1605 (EENH…EKVK). Phosphoserine is present on residues S605 and S612. T616 carries the phosphothreonine modification. Basic and acidic residues predominate over residues 623-667 (WEEKKQREAERLPDRTEAREESEPEVKEDVIEKAELEEMEEVHPS). A phosphoserine mark is found at S644, S667, and S787. Composition is skewed to polar residues over residues 847–860 (EDQS…PQTE) and 871–883 (TVTS…TEAT). S874, S877, S878, and S891 each carry phosphoserine. T894 carries the post-translational modification Phosphothreonine. A phosphoserine mark is found at S896, S900, S909, S986, S996, S1004, S1013, S1019, and S1029. Basic and acidic residues predominate over residues 1031–1065 (GDTKRTPGVGKEDAAEETVKPGPEEGTLEKEEKVP). 12 positions are modified to phosphoserine: S1069, S1144, S1146, S1160, S1172, S1190, S1200, S1203, S1209, S1218, S1221, and S1264. Over residues 1131-1146 (KPQKDEVLRYPDRSLS) the composition is skewed to basic and acidic residues. Residues 1154-1169 (SVLSVPSPDTANQEPT) are compositionally biased toward polar residues. 2 stretches are compositionally biased toward polar residues: residues 1211 to 1224 (DVSS…SLGT) and 1264 to 1278 (SPPT…AQTD). Residues 1289-1299 (PASSFSHSTPS) show a composition bias toward low complexity. S1326, S1329, S1544, S1600, and S1626 each carry phosphoserine. Composition is skewed to basic and acidic residues over residues 1338–1548 (IAIK…EKKD) and 1586–1605 (QEDK…EKVK). Residues 1632 to 1642 (RAREQEEKYWR) show a composition bias toward basic and acidic residues. 3 disordered regions span residues 1632–1684 (RARE…RYWR), 1713–1879 (DGQG…FSWG), and 1892–2673 (EGAA…LVNG). S1654 is subject to Phosphoserine. The segment covering 1655–1666 (PTREEPAGEQKE) has biased composition (basic and acidic residues). Residues S1675, S1749, S1762, S1776, S1791, S1797, S1801, S1812, and S1818 each carry the phosphoserine modification. Over residues 1852-1867 (LPPAPLSPAPGPPTPA) the composition is skewed to pro residues. The segment covering 1907-1929 (KDYRKAEGEREEEGRAEAPDKSS) has biased composition (basic and acidic residues). A Phosphoserine modification is found at S1931. Residues 1951 to 1964 (PEQREPTPYPDERS) show a composition bias toward basic and acidic residues. A Phosphothreonine modification is found at T1957. A compositionally biased stretch (polar residues) spans 2019–2033 (SPISPKSLQSDTPTF). S2022 carries the post-translational modification Phosphoserine. Over residues 2042–2066 (TVPPRPEPGPSMEPSLTPPAVPPRA) the composition is skewed to pro residues. T2058 carries the phosphothreonine modification. 4 positions are modified to phosphoserine: S2074, S2104, S2106, and S2108. A compositionally biased stretch (basic and acidic residues) spans 2086–2122 (PDRRSPSPKESGRSHWDDSTSDSELEKGAREQPEKEA). A compositionally biased stretch (pro residues) spans 2175 to 2184 (PAPPQLPSPA). S2235, S2252, S2256, S2259, and S2260 each carry phosphoserine. Polar residues predominate over residues 2257 to 2268 (EGSSSEATTPVI). A compositionally biased stretch (low complexity) spans 2312-2325 (ASLDLALAPAPSLP). S2449 is subject to Phosphoserine. Residues 2461 to 2473 (IDDRDLSTEEVRL) are compositionally biased toward basic and acidic residues. Low complexity predominate over residues 2502–2514 (SASDSGSSQSDSD). The span at 2559-2575 (DPPPLPQPDPRPSPPRP) shows a compositional bias: pro residues. Residues 2590–2602 (GRVERLREKEKVQ) are compositionally biased toward basic and acidic residues. S2649 and S2664 each carry phosphoserine.

It belongs to the MAP1 family. As to quaternary structure, 3 different light chains, LC1 (a cleavage product of MAP1B), LC2 (a cleavage product of MAP1A) and LC3 (produced by one of the MAP1LC3 genes), can associate with the MAP1A or MAP1B heavy chains. Interacts with TIAM2. Interacts with guanylate kinase-like domain of DLG1, DLG2 and DLG4. Binds to CSNK1D. In terms of assembly, interacts with ELAVL4. Phosphorylated by CSNK1D. In terms of processing, LC2 is generated from MAP1A by proteolytic processing. As to expression, brain.

It localises to the cytoplasm. The protein resides in the cytoskeleton. Its function is as follows. Structural protein involved in the filamentous cross-bridging between microtubules and other skeletal elements. The protein is Microtubule-associated protein 1A (MAP1A) of Homo sapiens (Human).